The primary structure comprises 505 residues: Alpha-internexin (505 aa).

The head stretch occupies residues 1–87 (MSFGSEHYLC…SQAAARTNEY (87 aa)). A Phosphoserine modification is found at Ser72. Residues 88-129 (KIIRTNEKEQLQGLNDRFAVFIEKVHQLETQNRALEAELAAL) are coil 1A. Residues 94–407 (EKEQLQGLND…KLLEGEETRF (314 aa)) form the IF rod domain. The interval 130-142 (RQRHAEPSRVGEL) is linker 1. Residues 143–238 (FQRELRELRA…QVHDEEVAEL (96 aa)) form a coil 1B region. A Phosphoserine modification is found at Ser219. Positions 239–262 (LATLQASSQAAAEVDVAVAKPDLT) are linker 2. The tract at residues 263–408 (SALREIRAQY…LLEGEETRFS (146 aa)) is coil 2. Lys290 carries the N6-acetyllysine modification. A phosphoserine mark is found at Ser335, Ser474, and Ser502. Residues 409-505 (TSGLSISGLN…EITTSSSQKM (97 aa)) form a tail region. The disordered stretch occupies residues 438-505 (KVSSAGLSLK…EITTSSSQKM (68 aa)). Low complexity predominate over residues 495 to 505 (EEITTSSSQKM).

This sequence belongs to the intermediate filament family. As to quaternary structure, forms homodimers (in vitro). Forms heterodimers with NEFL, NEFM or NEFH (in vitro). O-glycosylated. In terms of tissue distribution, expressed in the dorsal root ganglion neurons (at protein level).

Its function is as follows. Class-IV neuronal intermediate filament that is able to self-assemble. It is involved in the morphogenesis of neurons. It may form an independent structural network without the involvement of other neurofilaments or it may cooperate with NEFL to form the filamentous backbone to which NEFM and NEFH attach to form the cross-bridges. May also cooperate with the neuronal intermediate filament protein PRPH to form filamentous networks. The polypeptide is Alpha-internexin (Ina) (Rattus norvegicus (Rat)).